The sequence spans 497 residues: 3-ketoacyl-CoA synthase 6 (497 aa).

2 helical membrane passes run 25 to 45 (LVNH…AVEL) and 64 to 84 (LVQV…YFMS). One can recognise an FAE domain in the interval 81–370 (YFMSKPRTIY…FLTSLIGRKI (290 aa)). Residues C225, H304, H388, H392, H421, and N425 contribute to the active site.

Belongs to the thiolase-like superfamily. Chalcone/stilbene synthases family. In epidermal cells of aerial tissues and in the tapetum of anthers near maturity. Expressed in siliques, flowers and leaves.

The protein resides in the endoplasmic reticulum membrane. It carries out the reaction a very-long-chain acyl-CoA + malonyl-CoA + H(+) = a very-long-chain 3-oxoacyl-CoA + CO2 + CoA. Its pathway is lipid metabolism; fatty acid biosynthesis. Its activity is regulated as follows. Strongly inhibited by metazachlor and mefluidide. Functionally, contributes to cuticular wax and suberin biosynthesis. Involved in both decarbonylation and acyl-reduction wax synthesis pathways. Required for elongation of C24 fatty acids, an essential step of the cuticular wax production. Major condensing enzyme for stem wax and pollen coat lipid biosynthesis. This Arabidopsis thaliana (Mouse-ear cress) protein is 3-ketoacyl-CoA synthase 6.